Reading from the N-terminus, the 150-residue chain is L-alanine exporter AlaE (150 aa).

Transmembrane regions (helical) follow at residues 17–37 (FAMV…ISGM), 48–68 (LSIP…DFML), 86–106 (LVAY…VVGA), and 111–131 (IITA…FYGY).

It belongs to the AlaE exporter family.

It is found in the cell inner membrane. Its function is as follows. Exports L-alanine. The chain is L-alanine exporter AlaE from Aliivibrio fischeri (strain ATCC 700601 / ES114) (Vibrio fischeri).